We begin with the raw amino-acid sequence, 445 residues long: GTPase Der (445 aa).

EngA-type G domains follow at residues 3-167 (PVIA…YAGQ) and 180-353 (IKIA…AAAM). GTP-binding positions include 9–16 (GRPNVGKS), 56–60 (DTGGF), 119–122 (NKAE), 186–193 (GRPNVGKS), 233–237 (DTAGL), and 298–301 (NKWD). The 85-residue stretch at 354 to 438 (AKLPTPKLTR…PLRIEFRSSN (85 aa)) folds into the KH-like domain.

The protein belongs to the TRAFAC class TrmE-Era-EngA-EngB-Septin-like GTPase superfamily. EngA (Der) GTPase family. Associates with the 50S ribosomal subunit.

Its function is as follows. GTPase that plays an essential role in the late steps of ribosome biogenesis. The polypeptide is GTPase Der (Burkholderia vietnamiensis (strain G4 / LMG 22486) (Burkholderia cepacia (strain R1808))).